The chain runs to 529 residues: Peptide chain release factor 3 (529 aa).

The region spanning Ala-11–Met-280 is the tr-type G domain. GTP contacts are provided by residues Ser-20–Thr-27, Asp-88–His-92, and Asn-142–Asp-145.

The protein belongs to the TRAFAC class translation factor GTPase superfamily. Classic translation factor GTPase family. PrfC subfamily.

Its subcellular location is the cytoplasm. Functionally, increases the formation of ribosomal termination complexes and stimulates activities of RF-1 and RF-2. It binds guanine nucleotides and has strong preference for UGA stop codons. It may interact directly with the ribosome. The stimulation of RF-1 and RF-2 is significantly reduced by GTP and GDP, but not by GMP. The sequence is that of Peptide chain release factor 3 from Yersinia enterocolitica serotype O:8 / biotype 1B (strain NCTC 13174 / 8081).